Consider the following 413-residue polypeptide: Large ribosomal subunit protein uL4 (413 aa).

Ala2 is subject to N-acetylalanine. Residue Lys14 is modified to N6-acetyllysine. Omega-N-methylarginine is present on Arg97. Lys106 carries the post-translational modification N6-acetyllysine. A Glycyl lysine isopeptide (Lys-Gly) (interchain with G-Cter in SUMO2) cross-link involves residue Lys239. Residue Lys259 is modified to N6-acetyllysine. Phosphothreonine is present on Thr266. 2 positions are modified to phosphoserine: Ser290 and Ser295. At Arg300 the chain carries Citrulline. Lys327 participates in a covalent cross-link: Glycyl lysine isopeptide (Lys-Gly) (interchain with G-Cter in SUMO2). Lys333 is modified (N6-acetyllysine). Positions 355-413 are disordered; it reads AAALAAKSDPKEAPAKKKPVVGKKKKPVVGRKAAAAKKPAADKKAADKRAGPEDKKPAA. Position 361 is an N6-acetyllysine; alternate (Lys361). Lys361 participates in a covalent cross-link: Glycyl lysine isopeptide (Lys-Gly) (interchain with G-Cter in SUMO1); alternate. Ser362 bears the Phosphoserine mark. The segment covering 370–383 has biased composition (basic residues); the sequence is KKKPVVGKKKKPVV. Residues 393 to 413 show a composition bias toward basic and acidic residues; sequence PAADKKAADKRAGPEDKKPAA.

It belongs to the universal ribosomal protein uL4 family. As to quaternary structure, component of the large ribosomal subunit. May bind IPO9 with low affinity. Interacts with RBM3. Citrullinated by PADI4.

It localises to the cytoplasm. In terms of biological role, component of the large ribosomal subunit. The ribosome is a large ribonucleoprotein complex responsible for the synthesis of proteins in the cell. The polypeptide is Large ribosomal subunit protein uL4 (RPL4) (Oryctolagus cuniculus (Rabbit)).